We begin with the raw amino-acid sequence, 98 residues long: MQRSCNEKEGKPKCSEPKREEEHPYGAFEGQRLEGNFRQRLLQSLEEFKEDIDYRHFKGEEMTGEEEEMERCLEEIRSLRKKFRALHSNRTHSRDRPF.

The segment covering 1–24 (MQRSCNEKEGKPKCSEPKREEEHP) has biased composition (basic and acidic residues). The tract at residues 1-31 (MQRSCNEKEGKPKCSEPKREEEHPYGAFEGQ) is disordered. Residues 59–89 (GEEMTGEEEEMERCLEEIRSLRKKFRALHSN) adopt a coiled-coil conformation.

Belongs to the TFS-II family. TFA subfamily.

Its subcellular location is the nucleus. In terms of biological role, plays a role in the negative regulation of NF-kappa-B signaling at the basal level by modulating transcriptional activity of NF-kappa-B on its target gene promoters. Associates with cyclin D1 promoter containing Myc E-box sequence and transcriptionally represses cyclin D1 expression. Regulates telomerase reverse transcriptase expression and telomerase activity in both ALT (alternative lengthening of telomeres)and telomerase-positive cell lines. The polypeptide is Transcription elongation factor A protein-like 7 (Tceal7) (Rattus norvegicus (Rat)).